The chain runs to 546 residues: Probable protein kinase UbiB (546 aa).

Residues 124-502 (DFDIKPLASA…QARQGQSRYL (379 aa)) form the Protein kinase domain. Residues 130–138 (LASASIAQV) and Lys153 contribute to the ATP site. Asp288 functions as the Proton acceptor in the catalytic mechanism. 2 consecutive transmembrane segments (helical) span residues 499–519 (SRYL…LLIS) and 521–541 (VEAD…WIIG).

This sequence belongs to the ABC1 family. UbiB subfamily.

The protein resides in the cell inner membrane. It functions in the pathway cofactor biosynthesis; ubiquinone biosynthesis [regulation]. In terms of biological role, is probably a protein kinase regulator of UbiI activity which is involved in aerobic coenzyme Q (ubiquinone) biosynthesis. In Pectobacterium carotovorum subsp. carotovorum (strain PC1), this protein is Probable protein kinase UbiB.